The primary structure comprises 353 residues: Biotin synthase (353 aa).

Residues 51-270 (NEVQCNQLLN…IALARIMMPK (220 aa)) form the Radical SAM core domain. 3 residues coordinate [4Fe-4S] cluster: Cys-66, Cys-70, and Cys-73. The [2Fe-2S] cluster site is built by Cys-110, Cys-141, Cys-201, and Arg-274. The tract at residues 330–353 (APVEAHSHDHDHDHHDHHHGHSHS) is disordered. Over residues 334–343 (AHSHDHDHDH) the composition is skewed to basic and acidic residues. Positions 344-353 (HDHHHGHSHS) are enriched in basic residues.

It belongs to the radical SAM superfamily. Biotin synthase family. In terms of assembly, homodimer. [4Fe-4S] cluster is required as a cofactor. The cofactor is [2Fe-2S] cluster.

The enzyme catalyses (4R,5S)-dethiobiotin + (sulfur carrier)-SH + 2 reduced [2Fe-2S]-[ferredoxin] + 2 S-adenosyl-L-methionine = (sulfur carrier)-H + biotin + 2 5'-deoxyadenosine + 2 L-methionine + 2 oxidized [2Fe-2S]-[ferredoxin]. Its pathway is cofactor biosynthesis; biotin biosynthesis; biotin from 7,8-diaminononanoate: step 2/2. In terms of biological role, catalyzes the conversion of dethiobiotin (DTB) to biotin by the insertion of a sulfur atom into dethiobiotin via a radical-based mechanism. The sequence is that of Biotin synthase from Rhodopseudomonas palustris (strain HaA2).